A 457-amino-acid polypeptide reads, in one-letter code: Argininosuccinate lyase (457 aa).

This sequence belongs to the lyase 1 family. Argininosuccinate lyase subfamily.

It localises to the cytoplasm. The enzyme catalyses 2-(N(omega)-L-arginino)succinate = fumarate + L-arginine. The protein operates within amino-acid biosynthesis; L-arginine biosynthesis; L-arginine from L-ornithine and carbamoyl phosphate: step 3/3. The chain is Argininosuccinate lyase from Yersinia pseudotuberculosis serotype IB (strain PB1/+).